We begin with the raw amino-acid sequence, 198 residues long: Fucoxanthin-chlorophyll a-c binding protein B, chloroplastic (198 aa).

The transit peptide at 1–31 directs the protein to the chloroplast; sequence MKFTVFASLFASAAAFAPAQQAARTSVATNM. A run of 3 helical transmembrane segments spans residues 73-94, 114-134, and 174-196; these read ISML…GGDI, IPQA…TSVM, and GRAA…NILP.

The protein belongs to the fucoxanthin chlorophyll protein family. The LHC complex of chromophytic algae is composed of fucoxanthin, chlorophyll A and C bound non-covalently by fucoxanthin chlorophyll proteins (FCPs). The ratio of the pigments in LHC; fucoxanthin: chlorophyll C: chlorophyll A; (0.6-1): (0.1-0.3): (1).

It is found in the plastid. It localises to the chloroplast thylakoid membrane. Its function is as follows. The light-harvesting complex (LHC) functions as a light receptor, it captures and delivers excitation energy to photosystems with which it is closely associated. Energy is transferred from the carotenoid and chlorophyll C (or B) to chlorophyll A and the photosynthetic reaction centers where it is used to synthesize ATP and reducing power. This is Fucoxanthin-chlorophyll a-c binding protein B, chloroplastic (FCPB) from Phaeodactylum tricornutum (Diatom).